The primary structure comprises 471 residues: MKVTQEKLPDSQVGLEIEIPATASKKVYENVVKKLTRTVNIPGFRRGKVPRAIVIQRLGQSYIKATAIEELIDDSIKAAVKQEELPIIGNFSLRSDMENLIQIFDPEAPLTIKVAADVFPEAEYEPESYKKITAQAEEIEYSADAVDQWLKGEQEKRATLVPVEDRPAALGDLAIVDYAAFQVAEDGQAGEAIAEVKGSDFEVTLEDGRFVAGIVDGIVGMAVDETKLIPVTFPEDYPLEAVAGEDVLFEIKLKEIKFRELPELDDDFAEDVSEFETMAELKADLEKQFQEQAKQRTDDNIKAAIKKKLGELFTGDLPETMIKQECDRLVAQTAMELERMGLDVSQLFRQGDDMLQTLKDNSRPEAIANLKTDLMIGAIAKEEKIQPTEAEVKERCDELRQEFKGEKIDESRLVNFVESSLTESKVLDLLKEWADVELLPEGSLSQTEEDTPDDDAEEEAIVDVEATSDEE.

The 92-residue stretch at 171–262 (GDLAIVDYAA…LKEIKFRELP (92 aa)) folds into the PPIase FKBP-type domain. Residues 440–471 (PEGSLSQTEEDTPDDDAEEEAIVDVEATSDEE) are disordered. Residues 447–471 (TEEDTPDDDAEEEAIVDVEATSDEE) show a composition bias toward acidic residues.

Belongs to the FKBP-type PPIase family. Tig subfamily.

It is found in the cytoplasm. The catalysed reaction is [protein]-peptidylproline (omega=180) = [protein]-peptidylproline (omega=0). Involved in protein export. Acts as a chaperone by maintaining the newly synthesized protein in an open conformation. Functions as a peptidyl-prolyl cis-trans isomerase. In Synechocystis sp. (strain ATCC 27184 / PCC 6803 / Kazusa), this protein is Trigger factor (tig).